A 466-amino-acid polypeptide reads, in one-letter code: ATP synthase subunit beta (466 aa).

153 to 160 contributes to the ATP binding site; it reads GGAGVGKT.

Belongs to the ATPase alpha/beta chains family. As to quaternary structure, F-type ATPases have 2 components, CF(1) - the catalytic core - and CF(0) - the membrane proton channel. CF(1) has five subunits: alpha(3), beta(3), gamma(1), delta(1), epsilon(1). CF(0) has three main subunits: a(1), b(2) and c(9-12). The alpha and beta chains form an alternating ring which encloses part of the gamma chain. CF(1) is attached to CF(0) by a central stalk formed by the gamma and epsilon chains, while a peripheral stalk is formed by the delta and b chains.

The protein resides in the cell membrane. It carries out the reaction ATP + H2O + 4 H(+)(in) = ADP + phosphate + 5 H(+)(out). Produces ATP from ADP in the presence of a proton gradient across the membrane. The catalytic sites are hosted primarily by the beta subunits. The protein is ATP synthase subunit beta of Leuconostoc citreum (strain KM20).